The sequence spans 267 residues: MENSFKAALKAGRPQIGLWLGLSSSYSAELLAGPGFDWLLIDGEHAPNNVQTVLTQLQAIAPYPSQPVVRPSWNDPVQIKQLLDVGTQTLLVPMVQNADEARKAVRATRYPPAGIRGVGSALARASRWNRIPDYLQKANDQMCVLVQIETREAMKNLPQILDVEGVDGVFIGPADLSADMGYAGNPQHPEVQAAIEQAIVQIREAGKAPGILIANEQLAKRYLELGALFVAVGVDTTLLARAAEALAARFGNSSSISMAKQNNNSVY.

Histidine 45 (proton acceptor) is an active-site residue. Residue glutamine 147 coordinates substrate. Residue glutamate 149 coordinates a divalent metal cation. Residues alanine 174 and aspartate 175 each coordinate substrate. Position 175 (aspartate 175) interacts with a divalent metal cation.

Belongs to the HpcH/HpaI aldolase family. Homohexamer; trimer of dimers. The cofactor is a divalent metal cation.

The enzyme catalyses 4-hydroxy-2-oxoheptanedioate = succinate semialdehyde + pyruvate. The protein operates within aromatic compound metabolism; 4-hydroxyphenylacetate degradation; pyruvate and succinate semialdehyde from 4-hydroxyphenylacetate: step 7/7. Its function is as follows. Catalyzes the reversible retro-aldol cleavage of 4-hydroxy-2-ketoheptane-1,7-dioate (HKHD) to pyruvate and succinic semialdehyde. This chain is 4-hydroxy-2-oxo-heptane-1,7-dioate aldolase, found in Shigella flexneri.